We begin with the raw amino-acid sequence, 136 residues long: Ribosome-binding factor A (136 aa).

The protein belongs to the RbfA family. In terms of assembly, monomer. Binds 30S ribosomal subunits, but not 50S ribosomal subunits or 70S ribosomes.

It is found in the cytoplasm. In terms of biological role, one of several proteins that assist in the late maturation steps of the functional core of the 30S ribosomal subunit. Associates with free 30S ribosomal subunits (but not with 30S subunits that are part of 70S ribosomes or polysomes). Required for efficient processing of 16S rRNA. May interact with the 5'-terminal helix region of 16S rRNA. The chain is Ribosome-binding factor A from Yersinia pestis bv. Antiqua (strain Antiqua).